The sequence spans 264 residues: Apolipoprotein A-I (264 aa).

The signal sequence occupies residues methionine 1 to alanine 18. 2 consecutive repeat copies span residues leucine 67–glycine 88 and proline 89–asparagine 110. A 10 X approximate tandem repeats region spans residues leucine 67–glutamine 264. Methionine 109 bears the Methionine sulfoxide mark. The 3; half-length repeat unit spans residues lysine 111 to glutamine 121. 3 repeat units span residues proline 122–glutamate 143, proline 144–valine 165, and proline 166–alanine 187. One copy of the 7; truncated repeat lies at proline 188–asparagine 207. Methionine 193 bears the Methionine sulfoxide mark. Residues proline 208 to lysine 229 form repeat 8. One copy of the 9; half-length repeat lies at proline 230–methionine 240. At methionine 240 the chain carries Methionine sulfoxide. Repeat unit 10 spans residues proline 241 to glutamine 264.

This sequence belongs to the apolipoprotein A1/A4/E family. As to quaternary structure, homodimer. Interacts with APOA1BP and CLU. Component of a sperm activating protein complex (SPAP), consisting of APOA1, an immunoglobulin heavy chain, an immunoglobulin light chain and albumin. Interacts with NDRG1. Interacts with SCGB3A2. Interacts with NAXE and YJEFN3. Post-translationally, glycosylated. In terms of processing, palmitoylated. Phosphorylation sites are present in the extracellular medium.

It localises to the secreted. Functionally, participates in the reverse transport of cholesterol from tissues to the liver for excretion by promoting cholesterol efflux from tissues and by acting as a cofactor for the lecithin cholesterol acyltransferase (LCAT). As part of the SPAP complex, activates spermatozoa motility. The chain is Apolipoprotein A-I (Apoa1) from Nannospalax galili (Northern Israeli blind subterranean mole rat).